Consider the following 719-residue polypeptide: Lanosterol synthase (719 aa).

Residues 118–160 form a PFTB 1 repeat; it reads RIEVIRYLVNHANPEDGGWGIHIEGKSTVFGTALNYVVLRILG. The active-site Proton donor is the aspartate 451. 3 PFTB repeats span residues 478–523, 555–595, and 604–645; these read LKDS…MIEH, VKNA…SCVK, and SRRA…VVQT.

It belongs to the terpene cyclase/mutase family.

The catalysed reaction is (S)-2,3-epoxysqualene = lanosterol. It participates in terpene metabolism; lanosterol biosynthesis; lanosterol from farnesyl diphosphate: step 3/3. Catalyzes the cyclization of (S)-2,3 oxidosqualene to lanosterol, a reaction that forms the sterol nucleus. This chain is Lanosterol synthase (ERG7), found in Pneumocystis carinii.